We begin with the raw amino-acid sequence, 849 residues long: SMY2 homolog 2 (849 aa).

Positions 149–205 (ESQWKYIDSNGNIQGPFGTNNMSQWYQGGYFTPTLQICRLATSPEPFGVNDRFIRLG) constitute a GYF domain. 4 disordered regions span residues 305-505 (APLS…TTNL), 527-547 (DLKK…QLDR), 593-612 (TKIN…IKPD), and 634-661 (NRAS…NTSN). The span at 308-318 (STTSSRSNKTT) shows a compositional bias: low complexity. Residues 319-331 (SSHEEKVPSHEEA) show a composition bias toward basic and acidic residues. Thr-350 bears the Phosphothreonine mark. 3 stretches are compositionally biased toward basic and acidic residues: residues 361-375 (TKQE…KEQN), 387-403 (VDRK…KSKD), and 425-443 (LLEE…EEQR). A coiled-coil region spans residues 410–484 (EEQKRFAKAE…EKQKELLNNI (75 aa)). Residues 444-455 (KLKKEKKLKQKQ) show a composition bias toward basic residues. Positions 456-479 (KKEEEKLKKKKKEEGKLEKEKQKE) are enriched in basic and acidic residues. A compositionally biased stretch (polar residues) spans 483–505 (NILTGDTETPSSENTATSITTNL). The span at 594–605 (KINSQSKINKAN) shows a compositional bias: polar residues. The span at 644-661 (SRTPSPSSSALNSSNTSN) shows a compositional bias: low complexity.

It belongs to the SMY2/mpd2 family. As to quaternary structure, interacts with ribosomes. Interacts with EAP1 and MSL5 (via the GYP domain).

Its subcellular location is the cytoplasm. This Saccharomyces cerevisiae (strain ATCC 204508 / S288c) (Baker's yeast) protein is SMY2 homolog 2 (SYH1).